A 1278-amino-acid chain; its full sequence is SMC5-SMC6 complex localization factor protein 2 (1278 aa).

4 disordered regions span residues 1-235 (MTRR…LGAR), 248-337 (EQKK…KRTE), 443-491 (RINS…FIRH), and 509-582 (EPED…KETK). Over residues 39–50 (KRTESPGDRKQS) the composition is skewed to basic and acidic residues. Residues 94 to 103 (SSPKKLKPKR) show a composition bias toward basic residues. Basic and acidic residues-rich tracts occupy residues 118–133 (GGKEHHKDRGVHESRR), 156–174 (LPKEIKAQKKKHQSPERRK), 180–199 (ESNREKNDRDRGKNSEDSRK), and 248–258 (EQKKLRKEQME). Composition is skewed to polar residues over residues 259-277 (QRINSENSFSEASNLSLKS) and 318-329 (SDSWELSGSKQN). Basic and acidic residues-rich tracts occupy residues 449 to 463 (KEQRNSVDSDLKSTK) and 469 to 489 (KARESFLEKRPDTSHQREKFI). Residues 519 to 540 (ADSAPSNAGHHSSRNSDQVHSA) are compositionally biased toward polar residues. S591 is modified (phosphoserine). 3 disordered regions span residues 598-724 (PLNA…EEEE), 739-764 (RTPTTSGKPPAVSKGLRSQSSDMKEY), and 798-820 (IRQGRGIKSPLRTGDQDSTDDGD). Residues 609 to 630 (PKKDKERSSSKERSGHSTESSK) show a composition bias toward basic and acidic residues. Low complexity-rich tracts occupy residues 643–654 (SNESSGKNSGGS), 666–675 (PPAALEVVPS), and 688–697 (SGNSNAGSNA). Positions 707–724 (DSDEESLGYTLESDEEEE) are enriched in acidic residues. S708, S712, and S719 each carry phosphoserine. The tract at residues 740–1278 (TPTTSGKPPA…QLHDFWVPDS (539 aa)) is interaction with SIMC1. The interval 769–1271 (TYTNTLERLV…NCRPTQGQLH (503 aa)) is NSE6-like domain. The interval 807–1278 (PLRTGDQDST…QLHDFWVPDS (472 aa)) is required for interaction with SLF1 and RAD18.

The protein belongs to the FAM178 family. As to quaternary structure, forms a heterodimer with SIMC1. Interacts with SLF1 (via N-terminus); this interaction links RAD18 to the SMC5-SMC6 complex. Interacts with RAD18; this interaction is increased in a SLF1-dependent manner. Interacts with SMC5 and SMC6.

Its subcellular location is the nucleus. The protein localises to the PML body. Functionally, plays a role in the DNA damage response (DDR) pathway by regulating postreplication repair of UV-damaged DNA and genomic stability maintenance. The SLF1-SLF2 complex acts to link RAD18 with the SMC5-SMC6 complex at replication-coupled interstrand cross-links (ICL) and DNA double-strand breaks (DSBs) sites on chromatin during DNA repair in response to stalled replication forks. Promotes the recruitment of the SMC5-SMC6 complex to DNA lesions. May play a role in SMC5-SMC6 complex recruitment for viral restriction. Forms a complex with SIMC1 and this complex is required to recruit SMC5-SMC6 complex to PML nuclear bodies and sites of viral replication. This is SMC5-SMC6 complex localization factor protein 2 from Mus musculus (Mouse).